The following is a 1133-amino-acid chain: MNELRMPNLVRPNRPLREPASRPLTPSRFPVPSQPDAAYTGSAAGSTGLGSPGPAIMDGSTSFGLVQPAPTAHFCHYCGQQGIFRCKGCKKTPYCSVDCQREDWKAHRHMCKSFDPETVGENMKESPDSDNVREDSLNIQRIYLKDLNATKYTKGAEIQGAVVEFNSPGRFFFLPEDPKVMEALMSITAEXQKXPSSTVGTPYVPCVGEVCSVQFSXDLNWYRGLIQTLAADQKTAHVLYIDYGNAENVPVERIKPLNIATKPYCPCAMECQXAGVVPIVDSWSTECCMTVRQLLGGKTLTIKLVDTLKNGRVHTVDIQLSIGKQLSTFLLEQGYAFAEAAAVGSAPAKKDPSALLEASMENFKRCCEGKDINEWAQPPEPLTLTIGDRFSVVVSHFQSPTDFIVQKVENAGVIQDLQLKLREHCSGVETQQDFRPAPGTVCCAQFSEDKQWYRAQVLAYSTEKSVCVGYIDFGNSEEVDLNHLRPISPALLALPKQAISCILAGVQPVEDSWSEECISTMLRMIANKTVNVEIQSAHKGKALVAIIEGEGYSEINVAELLISANYAAPADSNTLQQTEETTASAEPPASPPVCEPLVWSCVELPSDGQTVVLSTSAVTSPAEFYCCVGPTTDHQVLMELGVQLKQHCQSDSTYFVPKVGEPCCVKFSGDGKWYRAMVKELLGDVVKVNFVDFGHNMIVGKGCLRSITPKLLKLPFQAVRCWLAGVKPAGSEWSSEALLWFQNLVDGAQLLARVVSVSQQGYGVELESGGQSVAAALVSQQFAKPSGNLSKDPVRSPTTKQEDLRGGDQSQALTPASNDTQAVCEDGKSEEEPSEVATFSSAWKTAELPLNETFQPCVAAVINPTLFYLLHPIQNVDQQKLQEVMLELALHCSNYQSSSSVDTRPVPGAACCAQFSVDKIWYRAIILEVGEAEMSVVYADYGNSEKVPVSQILPIPTRLLQLPFKIIRCTLAGNEHFPVEWPPQVQQVFRSELLNVMATVQSFDGSANVLSLALPPERGGRNLAAVIQEMLHVHRKGSPLPDASQTPGSDATEPSCIKLGSTTASPDEPEDAAEPADAVTNTQESTPQEQKEMDQATSVHDLQGPGCCCQSLKKQMDRLEKMVQLLLSLQAEG.

The interval 1–55 is disordered; it reads MNELRMPNLVRPNRPLREPASRPLTPSRFPVPSQPDAAYTGSAAGSTGLGSPGPA. Low complexity predominate over residues 37–46; the sequence is AAYTGSAAGS. Zn(2+)-binding residues include C75, C78, C86, C89, C95, C99, H107, and C111. The MYND-type zinc-finger motif lies at 75 to 111; the sequence is CHYCGQQGIFRCKGCKKTPYCSVDCQREDWKAHRHMC. 3 Tudor domains span residues 204-264, 435-494, and 656-714; these read VPCV…TKPY, RPAP…LLAL, and VPKV…LLKL. Residues 786–836 form a disordered region; the sequence is SGNLSKDPVRSPTTKQEDLRGGDQSQALTPASNDTQAVCEDGKSEEEPSEV. Polar residues predominate over residues 808 to 821; that stretch reads DQSQALTPASNDTQ. Residues 904-962 form the Tudor 4 domain; sequence RPVPGAACCAQFSVDKIWYRAIILEVGEAEMSVVYADYGNSEKVPVSQILPIPTRLLQL. The interval 1036 to 1104 is disordered; the sequence is KGSPLPDASQ…QATSVHDLQG (69 aa). Polar residues predominate over residues 1079–1088; sequence VTNTQESTPQ.

This sequence belongs to the TDRD1 family. Interacts with MAEL. Interacts with PIWIL1, PIWIL2 and PIWIL4 (when methylated on arginine residues). In terms of tissue distribution, expressed in both the ovary and testis in the adult. Present in migrating primordial germ cells (PGCs) and also in the germ cells in both the gonadal primordia (stage 33), and in the developing ovary and testis.

The protein resides in the cytoplasm. Its function is as follows. Plays a central role during spermatogenesis by participating in the repression transposable elements and preventing their mobilization, which is essential for the germline integrity. Acts via the piRNA metabolic process, which mediates the repression of transposable elements during meiosis by forming complexes composed of piRNAs and Piwi proteins and governs the methylation and subsequent repression of transposons. Required for the localization of Piwi proteins to the meiotic nuage. Involved in the piRNA metabolic process by ensuring the entry of correct transcripts into the normal piRNA pool and limiting the entry of cellular transcripts into the piRNA pathway. May act by allowing the recruitment of piRNA biogenesis or loading factors that ensure the correct entry of transcripts and piRNAs into Piwi proteins. The polypeptide is Tudor domain-containing protein 1 (tdrd1) (Oryzias latipes (Japanese rice fish)).